The chain runs to 72 residues: Putative beta-neurotoxin (72 aa).

Residues 1-7 (IDMVVEC) form the signal peptide. Residues 9–71 (KDGYLMEHDG…TWSRATNRCG (63 aa)) enclose the LCN-type CS-alpha/beta domain. Cystine bridges form between cysteine 19–cysteine 70, cysteine 23–cysteine 45, cysteine 31–cysteine 51, and cysteine 35–cysteine 53.

Expressed by the venom gland.

It is found in the secreted. Functionally, beta toxins bind voltage-independently at site-4 of sodium channels (Nav) and shift the voltage of activation toward more negative potentials thereby affecting sodium channel activation and promoting spontaneous and repetitive firing. In Tityus pachyurus (Colombian scorpion), this protein is Putative beta-neurotoxin.